The chain runs to 197 residues: Nucleoid occlusion factor SlmA (197 aa).

Residues 7 to 67 (INRREHILQC…GLIEFIEDAI (61 aa)) enclose the HTH tetR-type domain. A DNA-binding region (H-T-H motif) is located at residues 30-49 (TTAKLAAEVGVSEAALYRHF). Residues 110–130 (ALLGENERLRSRIDVLFAKIE) are a coiled coil.

The protein belongs to the nucleoid occlusion factor SlmA family. Homodimer. Interacts with FtsZ.

The protein localises to the cytoplasm. Its subcellular location is the nucleoid. Its function is as follows. Required for nucleoid occlusion (NO) phenomenon, which prevents Z-ring formation and cell division over the nucleoid. Acts as a DNA-associated cell division inhibitor that binds simultaneously chromosomal DNA and FtsZ, and disrupts the assembly of FtsZ polymers. SlmA-DNA-binding sequences (SBS) are dispersed on non-Ter regions of the chromosome, preventing FtsZ polymerization at these regions. The chain is Nucleoid occlusion factor SlmA from Shewanella frigidimarina (strain NCIMB 400).